The sequence spans 197 residues: MTFEILELLDKTAVRKPLQKQLNFSLRFHQICYAWISVSTIWYIFFSAWFIRAAGYIFSGITVSIAFLLSIAFFCEADGKGWKKFVTLCIICAAPRLFFTPIYAVANIQTSHANNTMEFIEEFHNLGIMGFKDNKYNDISIIWFVYYYNFMLVFLAIQRLFCRKAVEEKKMKIFADTLREEQQKRTENEEAVGPLHI.

This is an uncharacterized protein from Caenorhabditis elegans.